The sequence spans 418 residues: Putative heat shock protein HSP 90-alpha A4 (418 aa).

Residues D33, K52, F78, and R204 each contribute to the ATP site. Disordered stretches follow at residues 255–289 (EDLE…TSAK) and 383–418 (GLGT…RMEK). A compositionally biased stretch (basic and acidic residues) spans 265 to 274 (EKKKQEEGKQ).

The protein belongs to the heat shock protein 90 family. Homodimer.

It localises to the cytoplasm. In terms of biological role, putative molecular chaperone that may promote the maturation, structural maintenance and proper regulation of specific target proteins. The polypeptide is Putative heat shock protein HSP 90-alpha A4 (HSP90AA4P) (Homo sapiens (Human)).